We begin with the raw amino-acid sequence, 195 residues long: MARCKS-related protein (195 aa).

The disordered stretch occupies residues 1–195 (MGSQSSKAPR…PTPASAEQNE (195 aa)). Glycine 2 carries N-myristoyl glycine lipidation. Threonine 14 carries the post-translational modification Phosphothreonine. Positions 16–26 (EEAAGASPAKA) are enriched in low complexity. Phosphoserine is present on residues serine 22, serine 36, serine 41, and serine 48. The segment covering 53-64 (GTDEAAGATGDA) has biased composition (low complexity). A Phosphoserine modification is found at serine 71. Over residues 76 to 85 (AKGEVPPKET) the composition is skewed to basic and acidic residues. Threonine 85 carries the post-translational modification Phosphothreonine. Over residues 86–98 (PKKKKKFSFKKPF) the composition is skewed to basic residues. Residues 87–110 (KKKKKFSFKKPFKLSGLSFKRNRK) form an effector domain involved in lipid-binding and calmodulin-binding region. Residues serine 93, serine 101, serine 104, serine 119, serine 120, and serine 135 each carry the phosphoserine modification. Threonine 148 carries the post-translational modification Phosphothreonine. 3 positions are modified to phosphoserine: serine 151, serine 162, and serine 165. The segment covering 153-195 (EPQAKGAEASAASEEEAGPQATEPSTPSGPESGPTPASAEQNE) has biased composition (low complexity). Phosphothreonine occurs at positions 178 and 187.

This sequence belongs to the MARCKS family. In terms of assembly, binds to filamentous actin (F-actin), but not to monomeric G-actin, independently of its phosphorylation status. In terms of processing, phosphorylated. Phosphorylation at Ser-120 and Thr-178 is non-redundantly catalyzed by MAPK8 in vivo. Phosphorylation at Thr-148 is preferentially catalyzed by MAPK8 in vivo, but this modification can also be catalyzed by other kinases in the absence of MAPK8. May be phosphorylated by protein kinase C, which disrupts the interaction with calmodulin.

Its subcellular location is the cytoplasm. It localises to the cytoskeleton. It is found in the cell membrane. Functionally, controls cell movement by regulating actin cytoskeleton homeostasis and filopodium and lamellipodium formation. When unphosphorylated, induces cell migration. When phosphorylated by MAPK8, induces actin bundles formation and stabilization, thereby reducing actin plasticity, hence restricting cell movement, including neuronal migration. May be involved in coupling the protein kinase C and calmodulin signal transduction systems. The protein is MARCKS-related protein (MARCKSL1) of Homo sapiens (Human).